The sequence spans 95 residues: Phosphoribosyl-ATP pyrophosphatase (95 aa).

This sequence belongs to the PRA-PH family.

The protein resides in the cytoplasm. The enzyme catalyses 1-(5-phospho-beta-D-ribosyl)-ATP + H2O = 1-(5-phospho-beta-D-ribosyl)-5'-AMP + diphosphate + H(+). It functions in the pathway amino-acid biosynthesis; L-histidine biosynthesis; L-histidine from 5-phospho-alpha-D-ribose 1-diphosphate: step 2/9. The sequence is that of Phosphoribosyl-ATP pyrophosphatase from Sulfolobus acidocaldarius (strain ATCC 33909 / DSM 639 / JCM 8929 / NBRC 15157 / NCIMB 11770).